The following is a 291-amino-acid chain: Ribose-phosphate pyrophosphokinase (291 aa).

ATP-binding positions include Asp34 to Glu36 and Arg93 to Gln94. Residues His127 and Asp165 each contribute to the Mg(2+) site. Residue Lys188 is part of the active site. D-ribose 5-phosphate is bound by residues Arg190, Asp216, and Ser220 to Thr224.

The protein belongs to the ribose-phosphate pyrophosphokinase family. Class III (archaeal) subfamily. As to quaternary structure, homodimer. The cofactor is Mg(2+).

It localises to the cytoplasm. It catalyses the reaction D-ribose 5-phosphate + ATP = 5-phospho-alpha-D-ribose 1-diphosphate + AMP + H(+). It functions in the pathway metabolic intermediate biosynthesis; 5-phospho-alpha-D-ribose 1-diphosphate biosynthesis; 5-phospho-alpha-D-ribose 1-diphosphate from D-ribose 5-phosphate (route I): step 1/1. Functionally, involved in the biosynthesis of the central metabolite phospho-alpha-D-ribosyl-1-pyrophosphate (PRPP) via the transfer of pyrophosphoryl group from ATP to 1-hydroxyl of ribose-5-phosphate (Rib-5-P). The protein is Ribose-phosphate pyrophosphokinase of Saccharolobus solfataricus (strain ATCC 35092 / DSM 1617 / JCM 11322 / P2) (Sulfolobus solfataricus).